The chain runs to 459 residues: Zinc finger and BTB domain-containing protein 9 (459 aa).

The BTB domain maps to 48-112 (CDVSLLVQGR…IYSGSLHLPL (65 aa)). Positions 178 to 189 (VRSSASTENSVL) are enriched in polar residues. Disordered stretches follow at residues 178–200 (VRSS…EGSE) and 212–274 (EEEE…ASQI). Residues Lys-285, Lys-293, and Lys-368 each participate in a glycyl lysine isopeptide (Lys-Gly) (interchain with G-Cter in SUMO2) cross-link. The interval 293–356 (KEKTKVLSGE…GGTGQAMHGP (64 aa)) is disordered. Residues 397–419 (FGCGICNKRFKLKHHLTEHMKTH) form a C2H2-type 1 zinc finger. The C2H2-type 2; atypical zinc-finger motif lies at 424–446 (HACPHCGRRFRVQAFFLRHRDLC).

The protein resides in the nucleus. Its function is as follows. May be involved in transcriptional regulation. In Mus musculus (Mouse), this protein is Zinc finger and BTB domain-containing protein 9 (Zbtb9).